A 186-amino-acid chain; its full sequence is Potassium-transporting ATPase KdpC subunit (186 aa).

A helical membrane pass occupies residues 10–30; sequence LTIITMVLCGFLFPLAITLIG.

The protein belongs to the KdpC family. In terms of assembly, the system is composed of three essential subunits: KdpA, KdpB and KdpC.

It is found in the cell membrane. Part of the high-affinity ATP-driven potassium transport (or Kdp) system, which catalyzes the hydrolysis of ATP coupled with the electrogenic transport of potassium into the cytoplasm. This subunit acts as a catalytic chaperone that increases the ATP-binding affinity of the ATP-hydrolyzing subunit KdpB by the formation of a transient KdpB/KdpC/ATP ternary complex. The protein is Potassium-transporting ATPase KdpC subunit of Staphylococcus aureus (strain bovine RF122 / ET3-1).